The following is a 185-amino-acid chain: Ribosome-recycling factor (185 aa).

It belongs to the RRF family.

The protein localises to the cytoplasm. Its function is as follows. Responsible for the release of ribosomes from messenger RNA at the termination of protein biosynthesis. May increase the efficiency of translation by recycling ribosomes from one round of translation to another. This Pectobacterium atrosepticum (strain SCRI 1043 / ATCC BAA-672) (Erwinia carotovora subsp. atroseptica) protein is Ribosome-recycling factor.